The chain runs to 204 residues: MTPPGRLYLLRVRSAPVLLLLGLLLGLPPGAQGFPGVGISPSAARTAYQHPQKHFIQGTLKPAAHLIGDPSIQNSLRWRANTDRAFLRHGFSLSNNSLLVPTSGLYFVYSQVVFSGEGCFPKATPTPLYLAHEVQLFSSQYPFHVPLLSAQKSVCPGPQGPWVRSVYQGAVFLLTQGDQLSTHTDGISHLLLSPSSVFFGAFAL.

A signal peptide spans 1–33; that stretch reads MTPPGRLYLLRVRSAPVLLLLGLLLGLPPGAQG. One can recognise a THD domain in the interval 62–204; the sequence is PAAHLIGDPS…SSVFFGAFAL (143 aa). N95 is a glycosylation site (N-linked (GlcNAc...) asparagine). A disulfide bridge links C119 with C155.

This sequence belongs to the tumor necrosis factor family. In terms of assembly, homotrimer, and heterotrimer of either two LTB and one LTA subunits or (less prevalent) two LTA and one LTB subunits. Interacts with TNFRSF14.

It localises to the secreted. The protein resides in the membrane. Functionally, cytokine that in its homotrimeric form binds to TNFRSF1A/TNFR1, TNFRSF1B/TNFBR and TNFRSF14/HVEM. In its heterotrimeric form with LTB binds to TNFRSF3/LTBR. Lymphotoxin is produced by lymphocytes and is cytotoxic for a wide range of tumor cells in vitro and in vivo. This Canis lupus familiaris (Dog) protein is Lymphotoxin-alpha (LTA).